Reading from the N-terminus, the 101-residue chain is Small ribosomal subunit protein uS14 (101 aa).

Belongs to the universal ribosomal protein uS14 family. As to quaternary structure, part of the 30S ribosomal subunit. Contacts proteins S3 and S10.

Functionally, binds 16S rRNA, required for the assembly of 30S particles and may also be responsible for determining the conformation of the 16S rRNA at the A site. In Escherichia coli O139:H28 (strain E24377A / ETEC), this protein is Small ribosomal subunit protein uS14.